Consider the following 495-residue polypeptide: Alpha-1B-glycoprotein (495 aa).

Positions 1 to 21 (MSMLVVFLLLWGVTWGPVTEA) are cleaved as a signal peptide. 5 consecutive Ig-like V-type domains span residues 22–113 (AIFY…LTGP), 114–206 (KSLP…ELAA), 207–299 (PPPP…PVEL), 300–397 (ILSD…LHVD), and 398–495 (GPPP…VAES). N-linked (GlcNAc...) (complex) asparagine glycosylation is present at Asn44. Cystine bridges form between Cys49–Cys93, Cys139–Cys182, Cys232–Cys279, Cys325–Cys374, and Cys423–Cys470. Asn179 carries an N-linked (GlcNAc...) asparagine glycan. Residues Asn363 and Asn371 are each glycosylated (N-linked (GlcNAc...) asparagine).

As to quaternary structure, interacts with CRISP3. In terms of tissue distribution, plasma.

It is found in the secreted. The chain is Alpha-1B-glycoprotein (A1BG) from Homo sapiens (Human).